The chain runs to 344 residues: Phenylalanine--tRNA ligase alpha subunit (344 aa).

Residue glutamate 256 coordinates Mg(2+).

This sequence belongs to the class-II aminoacyl-tRNA synthetase family. Phe-tRNA synthetase alpha subunit type 1 subfamily. In terms of assembly, tetramer of two alpha and two beta subunits. Mg(2+) serves as cofactor.

The protein resides in the cytoplasm. The enzyme catalyses tRNA(Phe) + L-phenylalanine + ATP = L-phenylalanyl-tRNA(Phe) + AMP + diphosphate + H(+). The protein is Phenylalanine--tRNA ligase alpha subunit of Geobacillus kaustophilus (strain HTA426).